A 493-amino-acid polypeptide reads, in one-letter code: MVPVIALVGRPNVGKSTLFNRLTKSRDAIVAEYAGLTRDRQYGEARWQGRTYIVIDTGGISGDEEGIDAKMAEQSLQAIEEADAVLFLVDSRAGMTAADQMIAEHLRKRNKRSFLIANKVDTIDPDLARAEFSPLGLGDALPIAAAHGRGINHMLQEALGIFPKDNAEEEGEGEPASEEVAEGEEPTRIPGPSEKDGIKIAIIGRPNVGKSTLVNRMLGEERVIVYDQAGTTRDSIYIPFERNEEMYTLIDTAGVRRRGKIFEAVEKFSVVKTLQAIQDANVVIFVMDAREGVVEHDLNLLGFVLETGRALVIALNKWDGMEAAERDYVKTELERRLLFVDFADIHFISALHGTGVGHLYKSVQESFRSAVTRWPTSRLTSILEDAVQVHQPPMVNGRRIKLRYAHLGGANPPLIVIHGNQVDAVPKAYTRYLEKTYRRVLKLVGTPIRIEYKGGENPYEGKKNSLTARQVNKKRRLMSHHKKAEKKKKDKRR.

The EngA-type G 1 domain occupies 3-166 (PVIALVGRPN…EALGIFPKDN (164 aa)). Residues 9–16 (GRPNVGKS), 56–60 (DTGGI), and 118–121 (NKVD) contribute to the GTP site. Residues 166–195 (NAEEEGEGEPASEEVAEGEEPTRIPGPSEK) form a disordered region. Over residues 167–184 (AEEEGEGEPASEEVAEGE) the composition is skewed to acidic residues. The region spanning 198–371 (IKIAIIGRPN…SVQESFRSAV (174 aa)) is the EngA-type G 2 domain. GTP-binding positions include 204–211 (GRPNVGKS), 251–255 (DTAGV), and 316–319 (NKWD). Residues 372-456 (TRWPTSRLTS…PIRIEYKGGE (85 aa)) enclose the KH-like domain. Residues 454-463 (GGENPYEGKK) are compositionally biased toward basic and acidic residues. A disordered region spans residues 454 to 493 (GGENPYEGKKNSLTARQVNKKRRLMSHHKKAEKKKKDKRR). Residues 471-493 (VNKKRRLMSHHKKAEKKKKDKRR) show a composition bias toward basic residues.

The protein belongs to the TRAFAC class TrmE-Era-EngA-EngB-Septin-like GTPase superfamily. EngA (Der) GTPase family. In terms of assembly, associates with the 50S ribosomal subunit.

GTPase that plays an essential role in the late steps of ribosome biogenesis. This Pseudomonas aeruginosa (strain UCBPP-PA14) protein is GTPase Der.